A 310-amino-acid polypeptide reads, in one-letter code: Olfactory receptor 5W2 (310 aa).

Over 1-25 (MDWENCSSLTDFFLLGITNNPEMKV) the chain is Extracellular. N5 carries an N-linked (GlcNAc...) asparagine glycan. The chain crosses the membrane as a helical span at residues 26–46 (TLFAVFLAVYIINFSANLGMI). Residues 47–54 (VLIRMDYQ) are Cytoplasmic-facing. A helical transmembrane segment spans residues 55 to 75 (LHTPMYFFLSHLSFCDLCYST). Over 76–99 (ATGPKMLVDLLAKNKSIPFYGCAL) the chain is Extracellular. Residues 100–120 (QFLVFCIFADSECLLLSVMAF) traverse the membrane as a helical segment. The Cytoplasmic segment spans residues 121 to 139 (DRYKAIINPLLYTVNMSSR). The helical transmembrane segment at 140-160 (VCYLLLTGVYLVGIADALIHM) threads the bilayer. Residues 161–196 (TLAFRLCFCGSNEINHFFCDIPPLLLLSRSDTQVNE) lie on the Extracellular side of the membrane. The helical transmembrane segment at 197–217 (LVLFTVFGFIELSTISGVFIS) threads the bilayer. Over 218 to 237 (YCYIILSVLEIHSAEGRFKA) the chain is Cytoplasmic. The helical transmembrane segment at 238–258 (LSTCTSHLSAVAIFQGTLLFM) threads the bilayer. The Extracellular segment spans residues 259-271 (YFRPSSSYSLDQD). Residues 272–292 (KMTSLFYTLVVPMLNPLIYSL) form a helical membrane-spanning segment. At 293–310 (RNKDVKEALKKLKNKILF) the chain is on the cytoplasmic side.

This sequence belongs to the G-protein coupled receptor 1 family.

It localises to the cell membrane. Functionally, odorant receptor. This Homo sapiens (Human) protein is Olfactory receptor 5W2 (OR5W2).